Here is a 440-residue protein sequence, read N- to C-terminus: Signal recognition particle 54 kDa protein (440 aa).

GTP is bound by residues 104–111 (GLQGSGKT), 184–188 (DTAGR), and 242–245 (TKLD).

It belongs to the GTP-binding SRP family. SRP54 subfamily. In terms of assembly, part of the signal recognition particle protein translocation system, which is composed of SRP and FtsY. Archaeal SRP consists of a 7S RNA molecule of 300 nucleotides and two protein subunits: SRP54 and SRP19.

It is found in the cytoplasm. The catalysed reaction is GTP + H2O = GDP + phosphate + H(+). Involved in targeting and insertion of nascent membrane proteins into the cytoplasmic membrane. Binds to the hydrophobic signal sequence of the ribosome-nascent chain (RNC) as it emerges from the ribosomes. The SRP-RNC complex is then targeted to the cytoplasmic membrane where it interacts with the SRP receptor FtsY. This is Signal recognition particle 54 kDa protein from Methanosarcina acetivorans (strain ATCC 35395 / DSM 2834 / JCM 12185 / C2A).